Here is a 173-residue protein sequence, read N- to C-terminus: Co-chaperone protein HscB (173 aa).

One can recognise a J domain in the interval 2-74; that stretch reads DYFTLFGLPA…LKRAEYMLSQ (73 aa).

This sequence belongs to the HscB family. As to quaternary structure, interacts with HscA and stimulates its ATPase activity. Interacts with IscU.

Functionally, co-chaperone involved in the maturation of iron-sulfur cluster-containing proteins. Seems to help targeting proteins to be folded toward HscA. The sequence is that of Co-chaperone protein HscB from Xenorhabdus nematophila (strain ATCC 19061 / DSM 3370 / CCUG 14189 / LMG 1036 / NCIMB 9965 / AN6).